Consider the following 122-residue polypeptide: Large ribosomal subunit protein uL14 (122 aa).

It belongs to the universal ribosomal protein uL14 family. As to quaternary structure, part of the 50S ribosomal subunit. Forms a cluster with proteins L3 and L19. In the 70S ribosome, L14 and L19 interact and together make contacts with the 16S rRNA in bridges B5 and B8.

Its function is as follows. Binds to 23S rRNA. Forms part of two intersubunit bridges in the 70S ribosome. The chain is Large ribosomal subunit protein uL14 from Syntrophus aciditrophicus (strain SB).